We begin with the raw amino-acid sequence, 277 residues long: MNFSKLVVRKMPAHLQKLTVKSKTKVKSLKKNEYYTIIPETAEQEKVKVAIPIGKQIRVRQGDFVKRGDQLDEGNFDPHDILAIKGPNALHEYLVSEVQEVYRLQGVHINDKHIEVVVRSMLRKVIITDSGDTSFVNQQQVDKFLFDEENDRVEKEGGSPAQGTPVLLGLTKASLNTESYFSAASFQETTKVLTDAAIKGKTDNLMGLKENVIIGHMIPAGTGMKKYRDIEVFKDLPGDLDWDLAIGGRGRRSFRTFRVGSCFHCHTLSTCCRRGRG.

It catalyses the reaction N(2)-acetyl-L-ornithine + H2O = L-ornithine + acetate. The protein operates within amino-acid biosynthesis; L-arginine biosynthesis; L-ornithine from N(2)-acetyl-L-ornithine (linear): step 1/1. The chain is Putative acetylornithine deacetylase (argE) from Leptospira biflexa.